Here is a 306-residue protein sequence, read N- to C-terminus: Anamorsin (306 aa).

Positions 6-172 (IAPGQRVAVI…KPNFEVGSSS (167 aa)) are N-terminal SAM-like domain. The tract at residues 173–224 (QLKLSFAKKTSPSGKPSVDPATAKLWTLSASDMNDEEMDLLDSDELLDSEDL) is linker. Positions 237, 246, 249, and 251 each coordinate [2Fe-2S] cluster. The tract at residues 237–251 (CKEKGKKKACKNCTC) is fe-S binding site A. [4Fe-4S] cluster is bound by residues C270, C273, C281, and C284. 2 short sequence motifs (cx2C motif) span residues 270-273 (CGNC) and 281-284 (CASC). The tract at residues 270–284 (CGNCYLGDAFRCASC) is fe-S binding site B.

This sequence belongs to the anamorsin family. Monomer. Interacts with NDOR1. Interacts with CHCHD4. The cofactor is [2Fe-2S] cluster. [4Fe-4S] cluster serves as cofactor.

Its subcellular location is the cytoplasm. The protein localises to the nucleus. It localises to the mitochondrion intermembrane space. Functionally, component of the cytosolic iron-sulfur (Fe-S) protein assembly (CIA) machinery required for the maturation of extramitochondrial Fe-S proteins. Part of an electron transfer chain functioning in an early step of cytosolic Fe-S biogenesis, facilitating the de novo assembly of a [4Fe-4S] cluster on the scaffold complex NUBP1-NUBP2. Electrons are transferred to CIAPIN1 from NADPH via the FAD- and FMN-containing protein NDOR1. NDOR1-CIAPIN1 are also required for the assembly of the diferric tyrosyl radical cofactor of ribonucleotide reductase (RNR), probably by providing electrons for reduction during radical cofactor maturation in the catalytic small subunit. Has anti-apoptotic effects in the cell. Involved in negative control of cell death upon cytokine withdrawal. Promotes development of hematopoietic cells. The protein is Anamorsin of Gallus gallus (Chicken).